A 785-amino-acid chain; its full sequence is Terminal nucleotidyltransferase 4A (785 aa).

The segment at 56-184 (AAGRAAPAAG…QFHPGRRKRE (129 aa)) is disordered. The span at 68 to 85 (GPAPAASSPPPAPGPAAL) shows a compositional bias: pro residues. 2 stretches are compositionally biased toward low complexity: residues 86-98 (PPAL…PAAD) and 106-145 (SPSL…AGSG). Mg(2+) contacts are provided by Asp-290 and Asp-292. ATP is bound by residues Gly-353, Lys-378, Ser-396, and Tyr-397. The PAP-associated domain occupies 421 to 480 (NLGMLLVEFFELYGRNFNYLKTGIRIKEGGAYIAKEEIMKAMTSGYRPSMLCIEDPLLPG). Positions 481 and 485 each coordinate ATP. Residues 593-611 (PQLLSSGSSASSVSSLSGS) show a composition bias toward low complexity. 2 disordered regions span residues 593–625 (PQLL…TPSV) and 731–785 (KGSH…SLSR). Residues 757–774 (RGHHQYNRTGWRRKKHAH) show a composition bias toward basic residues.

This sequence belongs to the DNA polymerase type-B-like family. As to quaternary structure, component of a nuclear TRAMP-like complex, an ATP-dependent exosome regulatory complex consisting of a helicase (MTREX), an oligadenylate polymerase (TENT4B or TENT4A), and a substrate specific RNA-binding factor (ZCCHC7 or ZCCHC8). Several TRAMP-like complexes exist with specific compositions and are associated with nuclear, or nucleolar RNA exosomes. Requires Mg(2+) as cofactor. The cofactor is Mn(2+).

The protein localises to the cytoplasm. The protein resides in the nucleus. It is found in the nucleoplasm. The catalysed reaction is RNA(n) + ATP = RNA(n)-3'-adenine ribonucleotide + diphosphate. In terms of biological role, terminal nucleotidyltransferase that catalyzes preferentially the transfer of ATP and GTP on RNA 3' poly(A) tail creating a heterogeneous 3' poly(A) tail leading to mRNAs stabilization by protecting mRNAs from active deadenylation. Also functions as a catalytic subunit of a TRAMP-like complex which has a poly(A) RNA polymerase activity and is involved in a post-transcriptional quality control mechanism. Polyadenylation with short oligo(A) tails is required for the degradative activity of the exosome on several of its nuclear RNA substrates. Has no terminal uridylyltransferase activity, and does not play a role in replication-dependent histone mRNA degradation via uridylation. The protein is Terminal nucleotidyltransferase 4A of Mus musculus (Mouse).